The sequence spans 134 residues: Large ribosomal subunit protein uL22 (134 aa).

The protein belongs to the universal ribosomal protein uL22 family. In terms of assembly, part of the 50S ribosomal subunit. Contacts protein L32.

Its function is as follows. This protein binds specifically to 23S rRNA; its binding is stimulated by other ribosomal proteins, e.g. L4, L17, and L20. It is important during the early stages of 50S assembly. It makes multiple contacts with different domains of the 23S rRNA in the assembled 50S subunit and ribosome. In terms of biological role, the globular domain of the protein is located by the polypeptide exit tunnel on the outside of the subunit while an extended beta-hairpin forms part of the wall of the tunnel. Forms a pair of 'tweezers' with L32 that hold together two different domains of the 23S rRNA. Interacts with the tunnel-blocking modified macrolide azithromycin. Upon binding of the macrolide troleadomycin to the ribosome, the tip of the beta-hairpin is displaced, which severely restricts the tunnel. This and experiments in E.coli have led to the suggestion that it is part of the gating mechanism involved in translation arrest in the absence of the protein export system. This chain is Large ribosomal subunit protein uL22 (rplV), found in Deinococcus radiodurans (strain ATCC 13939 / DSM 20539 / JCM 16871 / CCUG 27074 / LMG 4051 / NBRC 15346 / NCIMB 9279 / VKM B-1422 / R1).